The primary structure comprises 1040 residues: Multidrug resistance protein MdtB (1040 aa).

Transmembrane regions (helical) follow at residues 16-36 (FIMR…AGII), 347-367 (LMMA…NIPA), 369-389 (IIPG…MVFL), 396-416 (LTLM…IVVI), 440-460 (IGFT…PLLF), 472-492 (FAIT…TLTP), 537-557 (WLTL…WVFI), 863-883 (LGST…VLGI), 888-908 (FIHP…ALLA), 911-931 (IAGS…IGIV), 968-988 (ILMT…STGV), and 998-1018 (IGMV…TPVI).

It belongs to the resistance-nodulation-cell division (RND) (TC 2.A.6) family. MdtB subfamily. Part of a tripartite efflux system composed of MdtA, MdtB and MdtC. MdtB forms a heteromultimer with MdtC.

It is found in the cell inner membrane. Its function is as follows. The MdtABC tripartite complex confers resistance against novobiocin and deoxycholate. The chain is Multidrug resistance protein MdtB from Escherichia coli (strain SE11).